We begin with the raw amino-acid sequence, 314 residues long: MRALFYKDGKLFTDNNFLNPVSDDNPAYEVLQHVKIPTHLTDVVVYEQTWEEALTRLIFVGSDSKGRRQYFYGKMHVQNRNAKRDRIFVRVYNVMKRINCFINKNIKKSSTDSNYQLAVFMLMETMFFIRFGKMKYLKENETVGLLTLKNKHIEISPDEIVIKFVGKDKVSHEFVVHKSNRLYKPLLKLTDDSSPEEFLFNKLSERKVYECIKQFGIRIKDLRTYGVNYTFLYNFWTNVKSISPLPSPKKLIALTIKQTAEVVGHTPSISKRAYMATTILEMVKDKNFLDVVSKTTFDEFLSIVVDHVKSSTDG.

Residues 77 to 314 form the Topo IB-type catalytic domain; it reads VQNRNAKRDR…VDHVKSSTDG (238 aa). Tyr274 (O-(3'-phospho-DNA)-tyrosine intermediate) is an active-site residue.

This sequence belongs to the type IB topoisomerase family.

It carries out the reaction ATP-independent breakage of single-stranded DNA, followed by passage and rejoining.. Its function is as follows. Releases the supercoiling and torsional tension of DNA introduced during the DNA replication and transcription by transiently cleaving and rejoining one strand of the DNA duplex. Introduces a single-strand break via transesterification at the specific target site 5'-[CT]CCTTp site in duplex DNA. The scissile phosphodiester is attacked by the catalytic tyrosine of the enzyme, resulting in the formation of a DNA-(3'-phosphotyrosyl)-enzyme intermediate and the expulsion of a 5'-OH DNA strand. The free DNA strand then undergoes passage around the unbroken strand thus removing DNA supercoils. Finally, in the religation step, the DNA 5'-OH attacks the covalent intermediate to expel the active-site tyrosine and restore the DNA phosphodiester backbone. The chain is DNA topoisomerase 1B (TOP1) from Vaccinia virus (strain Ankara) (VACV).